We begin with the raw amino-acid sequence, 201 residues long: Recombination protein RecR (201 aa).

The segment at 57 to 72 adopts a C4-type zinc-finger fold; the sequence is CSDCRTFTEQDVCAIC. One can recognise a Toprim domain in the interval 81–176; sequence GLVCVVESPA…MASRIAHGVP (96 aa).

This sequence belongs to the RecR family.

Functionally, may play a role in DNA repair. It seems to be involved in an RecBC-independent recombinational process of DNA repair. It may act with RecF and RecO. This is Recombination protein RecR from Pectobacterium atrosepticum (strain SCRI 1043 / ATCC BAA-672) (Erwinia carotovora subsp. atroseptica).